Reading from the N-terminus, the 161-residue chain is Myosin regulatory light chain A, smooth adductor muscle (161 aa).

A1 is subject to Blocked amino end (Ala). 2 EF-hand domains span residues 20 to 55 (KLMQEMKEAFTMIDQNRDGFIDINDLKEMFSSLGRT) and 89 to 124 (DTEETLRNAFAMFDELDTKKLNIEYIKDLLENMGDN). Positions 33, 35, 37, and 44 each coordinate Ca(2+).

In terms of biological role, in molluscan muscle, calcium regulation is associated with myosin rather than with actin. Muscle myosin contains two types of light chains: the catalytic light chain, essential for ATPase activity, and the regulatory light chain, a calcium-binding protein responsible for Ca(2+) dependent binding and Ca(2+) dependent Mg-ATPase activity. The polypeptide is Myosin regulatory light chain A, smooth adductor muscle (Mizuhopecten yessoensis (Japanese scallop)).